A 155-amino-acid chain; its full sequence is Putative pre-16S rRNA nuclease (155 aa).

This sequence belongs to the YqgF nuclease family.

It localises to the cytoplasm. Functionally, could be a nuclease involved in processing of the 5'-end of pre-16S rRNA. The chain is Putative pre-16S rRNA nuclease from Xanthomonas oryzae pv. oryzae (strain MAFF 311018).